A 493-amino-acid polypeptide reads, in one-letter code: Glutamyl-tRNA(Gln) amidotransferase subunit A (493 aa).

Active-site charge relay system residues include K78 and S159. S183 functions as the Acyl-ester intermediate in the catalytic mechanism.

It belongs to the amidase family. GatA subfamily. Heterotrimer of A, B and C subunits.

It catalyses the reaction L-glutamyl-tRNA(Gln) + L-glutamine + ATP + H2O = L-glutaminyl-tRNA(Gln) + L-glutamate + ADP + phosphate + H(+). Allows the formation of correctly charged Gln-tRNA(Gln) through the transamidation of misacylated Glu-tRNA(Gln) in organisms which lack glutaminyl-tRNA synthetase. The reaction takes place in the presence of glutamine and ATP through an activated gamma-phospho-Glu-tRNA(Gln). The chain is Glutamyl-tRNA(Gln) amidotransferase subunit A from Sphingopyxis alaskensis (strain DSM 13593 / LMG 18877 / RB2256) (Sphingomonas alaskensis).